Reading from the N-terminus, the 307-residue chain is Glutaminase (307 aa).

7 residues coordinate substrate: serine 66, asparagine 116, glutamate 160, asparagine 167, tyrosine 191, tyrosine 243, and valine 261.

This sequence belongs to the glutaminase family. Homotetramer.

The enzyme catalyses L-glutamine + H2O = L-glutamate + NH4(+). In Saccharophagus degradans (strain 2-40 / ATCC 43961 / DSM 17024), this protein is Glutaminase.